The primary structure comprises 251 residues: Capsid protein (251 aa).

Positions 1-27 (MPKRDLPWRSMPGTSKTSRNANYSPRA) are disordered. The short motif at 3–20 (KRDLPWRSMPGTSKTSRN) is the Bipartite nuclear localization signal element. Residues 12–23 (PGTSKTSRNANY) show a composition bias toward polar residues. The short motif at 35–49 (KASEWVHRPMYRKPR) is the Nuclear localization signal element. The segment at 63–80 (CEGPCKVQSYEQRHDISH) is a zinc-finger region. A Nuclear export signal motif is present at residues 96–117 (ITHRVGKRFCVKSVYILGKIWM). A Bipartite nuclear localization signal motif is present at residues 195–242 (KRFWKVNNHVVYNHQEAGKYENHTENALLLYMACTHASNPVYATLKIR).

The protein belongs to the geminiviridae capsid protein family. Homomultimer. Binds to single-stranded and double-stranded viral DNA. Interacts (via nuclear localization signals) with host importin alpha-1a.

The protein localises to the virion. The protein resides in the host nucleus. In terms of biological role, encapsidates the viral DNA into characteristic twinned ('geminate') particles. Binds the genomic viral ssDNA and shuttles it into and out of the cell nucleus. The CP of bipartite geminiviruses is not required for cell-to-cell or systemic movement. This is Capsid protein from Abutilon (Upland cotton).